The chain runs to 357 residues: Arginine kinase (357 aa).

Ala2 is modified (N-acetylalanine). In terms of domain architecture, Phosphagen kinase N-terminal spans 9-91; that stretch reads KLDEGFKKLE…FDPIIEDYHK (83 aa). 64–68 serves as a coordination point for L-arginine; that stretch reads GVGVY. The 238-residue stretch at 119-356 folds into the Phosphagen kinase C-terminal domain; that stretch reads FVISTRVRCG…LELIKIEKEM (238 aa). Residues 122-126 and His185 each bind ATP; that span reads STRVR. Glu225 provides a ligand contact to L-arginine. ATP is bound at residue Arg229. Residue Cys271 participates in L-arginine binding. ATP is bound by residues 280-284 and 309-314; these read RASVH and RGTRGE. Position 314 (Glu314) interacts with L-arginine.

It belongs to the ATP:guanido phosphotransferase family.

The catalysed reaction is L-arginine + ATP = N(omega)-phospho-L-arginine + ADP + H(+). In Eriocheir sinensis (Chinese mitten crab), this protein is Arginine kinase.